A 47-amino-acid polypeptide reads, in one-letter code: Laccase-2d (47 aa).

Residues 2–47 enclose the Plastocyanin-like domain; that stretch reads TGPVADLHIINKDLSPDGFQRPTVVAGGGRDVVSIGRAGDNVTIRF.

This sequence belongs to the multicopper oxidase family. As to quaternary structure, homodimer. Requires Cu cation as cofactor. Post-translationally, N-glycosylated; contains 17% carbohydrates.

It localises to the secreted. The enzyme catalyses 4 hydroquinone + O2 = 4 benzosemiquinone + 2 H2O. Inhibited by sodium azide, SDS and mercaptoethanol, but not by 4-hexyl resocinol, L-cysteine and dithiothreitol. Activity is inhibited by the heavy metal ions Cr, W, Sn, Ag(+) and Hg(2+), but not by Pb(2+), Fe(3+), Ni(2+), Li(2+), Co(2+) or Cd(2+). Lignin degradation and detoxification of lignin-derived products. Has highest activity towards ABTS, also active towards ferulic acid and guaiacol, but is not active towards tyrosine, vanillic acid, 2,5-dimethyl aniline, p-anisidine or violuric acid. The polypeptide is Laccase-2d (Cerrena unicolor (Canker rot fungus)).